A 403-amino-acid chain; its full sequence is MSEKGRLFTSESVTEGHPDKICDAISDSVLDALLAQDPRSRVAVETLVTTGQVHVVGEVTTTAKEAFADITNTVRERILDIGYDSSDKGFDGASCGVNIGIGAQSPDIAQGVDTAHETRVEGAADPLDAQGAGDQGLMFGYAIKDTPEMMPLPIALAHRLSRRLTEVRKSGVLPYLRPDGKTQVTIEYEDDVPVRLDTVVVSTQHAADIDLENTLTPDIREKVLNTVLDDLAHDTLDTSSTRLLVNPTGKFVVGGPMGDAGLTGRKIIVDTYGGWARHGGGAFSGKDPSKVDRSAAYAMRWVAKNIVAAGLAERVEVQVAYAIGKAAPVGLFVETFGTATVDPVKIEKIVPEVFDLRPGAIIRDLDLLRPIYAQTAAYGHFGRTDVELPWEQLNKVDELKRAV.

His-17 serves as a coordination point for ATP. Asp-19 is a binding site for Mg(2+). Glu-45 is a binding site for K(+). Residues Glu-58 and Gln-104 each coordinate L-methionine. Residues Gln-104 to Thr-114 form a flexible loop region. ATP contacts are provided by residues Asp-179–Lys-181, Lys-250–Phe-251, Asp-259, Arg-265–Lys-266, Ala-282, and Lys-286. Asp-259 is an L-methionine binding site. Lys-290 is a binding site for L-methionine.

This sequence belongs to the AdoMet synthase family. In terms of assembly, homotetramer; dimer of dimers. It depends on Mg(2+) as a cofactor. Requires K(+) as cofactor.

Its subcellular location is the cytoplasm. The catalysed reaction is L-methionine + ATP + H2O = S-adenosyl-L-methionine + phosphate + diphosphate. It functions in the pathway amino-acid biosynthesis; S-adenosyl-L-methionine biosynthesis; S-adenosyl-L-methionine from L-methionine: step 1/1. Its function is as follows. Catalyzes the formation of S-adenosylmethionine (AdoMet) from methionine and ATP. The overall synthetic reaction is composed of two sequential steps, AdoMet formation and the subsequent tripolyphosphate hydrolysis which occurs prior to release of AdoMet from the enzyme. The sequence is that of S-adenosylmethionine synthase from Mycolicibacterium paratuberculosis (strain ATCC BAA-968 / K-10) (Mycobacterium paratuberculosis).